The following is a 55-amino-acid chain: Cytochrome c oxidase subunit 7s (55 aa).

The chain crosses the membrane as a helical span at residues 13-35 (LVQDIGVALILGSIAGCFFKYGV).

In terms of assembly, slime mold cytochrome c oxidase consists of at least seven different polypeptides species, subunits I, II, III, IV, V, VI, and VIIe/s in order of MW.

The protein resides in the mitochondrion inner membrane. The catalysed reaction is 4 Fe(II)-[cytochrome c] + O2 + 8 H(+)(in) = 4 Fe(III)-[cytochrome c] + 2 H2O + 4 H(+)(out). Its function is as follows. This protein is one of the nuclear-coded polypeptide chains of cytochrome c oxidase, the terminal oxidase in mitochondrial electron transport. The polypeptide is Cytochrome c oxidase subunit 7s (cxgS) (Dictyostelium discoideum (Social amoeba)).